We begin with the raw amino-acid sequence, 244 residues long: 14-3-3 protein homolog 1 (244 aa).

It belongs to the 14-3-3 family.

This is 14-3-3 protein homolog 1 from Echinococcus multilocularis (Fox tapeworm).